The primary structure comprises 91 residues: Signal recognition particle 19 kDa protein (91 aa).

This sequence belongs to the SRP19 family. In terms of assembly, part of the signal recognition particle protein translocation system, which is composed of SRP and FtsY. Archaeal SRP consists of a 7S RNA molecule of 300 nucleotides and two protein subunits: SRP54 and SRP19.

It is found in the cytoplasm. In terms of biological role, involved in targeting and insertion of nascent membrane proteins into the cytoplasmic membrane. Binds directly to 7S RNA and mediates binding of the 54 kDa subunit of the SRP. The polypeptide is Signal recognition particle 19 kDa protein (Methanoregula boonei (strain DSM 21154 / JCM 14090 / 6A8)).